The sequence spans 368 residues: POU domain, class 3, transcription factor 1 (368 aa).

Polar residues predominate over residues 1–16 (MATTAQYIPRNNSLPS). Disordered stretches follow at residues 1–28 (MATTAQYIPRNNSLPSNPLMHPDSDRMH), 69–88 (TDWTSGTHIGQAEHNKASVQ), 100–134 (SHLVHQPTQNSHHGSWAPTTTHHLSPLSPASNGHQ), and 147–193 (SPQP…PSSD). Residues 79–88 (QAEHNKASVQ) are compositionally biased toward basic and acidic residues. Residues 105-134 (QPTQNSHHGSWAPTTTHHLSPLSPASNGHQ) are compositionally biased toward polar residues. A compositionally biased stretch (basic and acidic residues) spans 155–170 (GLRDPLHDDAGSHDNQ). The POU-specific domain maps to 187 to 261 (EDAPSSDDLE…LLNKWLEETD (75 aa)). The homeobox DNA-binding region spans 279 to 338 (KRKKRTSIEVGVKGALENHFLKCPKPSAHEITTLAGTLQLEKEVVRVWFCNRRQKEKRMT).

Belongs to the POU transcription factor family. Class-3 subfamily. Predominantly expressed in the embryonic and adult central nervous system.

It is found in the nucleus. Its function is as follows. Transcription factor that may play important roles in patterning the embryonic brain. Could directly respond to the reception of the sonic hedgehog (shh) signal. The protein is POU domain, class 3, transcription factor 1 (pou3f1) of Danio rerio (Zebrafish).